The chain runs to 106 residues: Cell division protein FtsB (106 aa).

At 1-3 (MGK) the chain is on the cytoplasmic side. Residues 4-21 (LTLLLLVLLGWLQYSLWL) traverse the membrane as a helical segment. Residues 22 to 106 (GKNGIHDYVR…SRPSTPNNTQ (85 aa)) are Periplasmic-facing. The stretch at 29 to 70 (YVRVKNDVAMQERNNSKLKARNDQLSAEIDDLTGGQEAIEER) forms a coiled coil.

The protein belongs to the FtsB family. In terms of assembly, part of a complex composed of FtsB, FtsL and FtsQ.

It is found in the cell inner membrane. Its function is as follows. Essential cell division protein. May link together the upstream cell division proteins, which are predominantly cytoplasmic, with the downstream cell division proteins, which are predominantly periplasmic. The polypeptide is Cell division protein FtsB (Photorhabdus laumondii subsp. laumondii (strain DSM 15139 / CIP 105565 / TT01) (Photorhabdus luminescens subsp. laumondii)).